The sequence spans 452 residues: Zinc finger protein 672 (452 aa).

4 consecutive C2H2-type zinc fingers follow at residues 14-36, 42-64, 70-92, and 99-122; these read YSCS…ERAH, FRCL…RRTH, YICS…LGAH, and CPCR…RRQH. The segment at 128-150 adopts a C2H2-type 5; degenerate zinc-finger fold; that stretch reads RRCPLCARTFRQSALLFHQARAH. 9 C2H2-type zinc fingers span residues 163-185, 199-221, 227-249, 255-277, 283-305, 311-333, 339-361, 367-389, and 395-417; these read HRCA…ARIH, HQCG…LQTH, FKCP…QRTH, YACG…RRSH, HACA…QRIH, FACP…RRTH, YRCE…RRNH, HKCP…RKTH, and AECA…QRAH.

This sequence belongs to the krueppel C2H2-type zinc-finger protein family.

It localises to the nucleus. In terms of biological role, may be involved in transcriptional regulation. This Homo sapiens (Human) protein is Zinc finger protein 672.